The sequence spans 316 residues: Ferrochelatase (316 aa).

Residues H188 and E269 each coordinate Fe cation.

It belongs to the ferrochelatase family.

Its subcellular location is the cytoplasm. It catalyses the reaction heme b + 2 H(+) = protoporphyrin IX + Fe(2+). It functions in the pathway porphyrin-containing compound metabolism; protoheme biosynthesis; protoheme from protoporphyrin-IX: step 1/1. Functionally, catalyzes the ferrous insertion into protoporphyrin IX. This is Ferrochelatase from Wolinella succinogenes (strain ATCC 29543 / DSM 1740 / CCUG 13145 / JCM 31913 / LMG 7466 / NCTC 11488 / FDC 602W) (Vibrio succinogenes).